A 996-amino-acid chain; its full sequence is MINNELKDIFSSNDFNSKTWINNLLSDCGGSGSSSGNAKSNQQSILTDQNNIKAELEIENICSNYLSKLQLYQIELNISLESITSESLLIVPKSIREVDRIRKESLHLKNRIKSISSKIGEMNNDSPQSMETVSVIEKLDQVKSRMEISIRSLKEAEKLLSFSKTVDQLFSSNDYLMISDKLEEVKQSLSVLSDVPEFREQSKKFNVYQDRLESQLKQPLQQSLQQKDLESCKNYLKIFTNIQRQDKFFIYYYQVRIDPLKLLWNSYSSSSSSSSSSSNFHNWLSKFYDEVLVMINSEFNWLSGLCPIDYIQVLENLIIHLFTTINPNVQSRIDQAITIANQTTQQPIKVNELLSIYKTTCSFLKSLSPIFPNIINSSSTPTTSPAVDKLFKVIFEPYKYFQNKFSEYEIKSVKSQLQSISPILTLQKKSGGGSGGSGNADFTNIIKNIENQFIPKSFQIAQQSIERFFDFTHTTDIDSYVNTVLNQIFTEISLILRDTINELKFITGLTTNYIIGSSGTFPNFNQQQQQINTPSSINGEVDPVKKLTNSHTRSHSRSGSGSGNSNSNSVGTSATLQNWEYFQGAMNLLQSIHQLLNKFQQFDNSTSLNIIHYLGNSNNSNNSSSNNDNDQFICNIRKFLLGKDLNKIQKLQISVQNLENIISSPLPLSSSSSVSKDQSISKKPLLLQESFNQISKLLSISQHFVYETLIYFIKLKLKELPKIVSNEWNNNNNNNNNPSQNNGGGGGGGLSYISQITDHLLTIPQQLDPYSEEELTRFSLSTSLQYPIKTCSNSEDDFYQNLLIQYQREKQFDDEQLLIEKLKEKQEQQQEQQEKEQQQEKEQQDADQDININTNNNNENDENDEDDELEDGIAHQWITIVAKATEKLYLQTIVEIITLNEPSCQQLSNDIGYLFNVLSALGVSAEPLLQKTQSLLEMNRDTFTSFYHQQLHNNNNNNNNNNGNSNNNNNNTNNISLLTNAEKNICNLIGKMRNIK.

Disordered stretches follow at residues 533-571 (TPSS…NSVG), 828-867 (QQQE…DEDD), and 950-974 (QLHN…NTNN). Residues 557–571 (RSGSGSGNSNSNSVG) are compositionally biased toward low complexity. Basic and acidic residues predominate over residues 828-844 (QQQEQQEKEQQQEKEQQ). Composition is skewed to low complexity over residues 849-858 (DININTNNNN) and 953-974 (NNNN…NTNN).

Belongs to the COG7 family. In terms of assembly, component of the conserved oligomeric Golgi complex which is composed of eight different subunits and is required for normal Golgi morphology and localization.

It localises to the golgi apparatus membrane. Its function is as follows. Required for normal Golgi function. In Dictyostelium discoideum (Social amoeba), this protein is Conserved oligomeric Golgi complex subunit 7 (cog7).